We begin with the raw amino-acid sequence, 559 residues long: Tissue-type plasminogen activator (559 aa).

A signal peptide spans 1–17; the sequence is MKRELLCVLLLCGLAFP. Residues 18 to 29 constitute a propeptide that is removed on maturation; it reads LPDQGIHGRFRR. The propeptide at 30 to 32 is removed by plasmin; it reads GAR. The Fibronectin type-I domain maps to 36-78; that stretch reads ATCRDEPTQTTYQQHQSWLRPMLRSSRVEYCRCNSGLVQCHSV. 17 disulfide bridges follow: Cys-38–Cys-68, Cys-66–Cys-75, Cys-83–Cys-94, Cys-88–Cys-105, Cys-107–Cys-116, Cys-124–Cys-205, Cys-145–Cys-187, Cys-176–Cys-200, Cys-213–Cys-294, Cys-234–Cys-276, Cys-265–Cys-289, Cys-297–Cys-428, Cys-340–Cys-356, Cys-348–Cys-417, Cys-442–Cys-516, Cys-474–Cys-490, and Cys-506–Cys-534. The important for binding to annexin A2 stretch occupies residues 39 to 49; sequence RDEPTQTTYQQ. The EGF-like domain maps to 79-117; that stretch reads PVRSCSEPRCFNGGTCQQALYFSDFVCQCPDGFVGKRCD. Kringle domains lie at 124–205 and 213–294; these read CFEE…TPAC and CYVG…MSPC. N-linked (GlcNAc...) asparagine glycosylation occurs at Asn-149. A Peptidase S1 domain is found at 309–558; the sequence is IKGGLYTDIT…YLDWIHDNMK (250 aa). Catalysis depends on charge relay system residues His-355 and Asp-404. Residue Asn-481 is glycosylated (N-linked (GlcNAc...) asparagine). Ser-510 functions as the Charge relay system in the catalytic mechanism.

This sequence belongs to the peptidase S1 family. As to quaternary structure, heterodimer of chain A and chain B held by a disulfide bond. Binds to fibrin with high affinity. This interaction leads to an increase in the catalytic efficiency of the enzyme due to an increase in affinity for plasminogen. Similarly, binding to heparin increases the activation of plasminogen. Binds to annexin A2, cytokeratin-8, fibronectin and laminin. Binds to mannose receptor and the low-density lipoprotein receptor-related protein (LRP1); these proteins are involved in TPA clearance. Binds LRP1B; binding is followed by internalization and degradation. Forms heterodimer with SERPINA5. Interacts with SERPINE1. In complex with SERPINE1, interacts with SORL1. The single chain, almost fully active enzyme, can be further processed into a two-chain fully active form by a cleavage after Arg-308 catalyzed by plasmin, tissue kallikrein or factor Xa.

The protein resides in the secreted. Its subcellular location is the extracellular space. It carries out the reaction Specific cleavage of Arg-|-Val bond in plasminogen to form plasmin.. Inhibited by SERPINA5. Inhibited by SERPINE1. In terms of biological role, converts the abundant, but inactive, zymogen plasminogen to plasmin by hydrolyzing a single Arg-Val bond in plasminogen. By controlling plasmin-mediated proteolysis, it plays an important role in tissue remodeling and degradation, in cell migration and many other physiopathological events. During oocyte activation, plays a role in cortical granule reaction in the zona reaction, which contributes to the block to polyspermy. This is Tissue-type plasminogen activator (Plat) from Mus musculus (Mouse).